A 148-amino-acid chain; its full sequence is Large ribosomal subunit protein bL9 (148 aa).

Belongs to the bacterial ribosomal protein bL9 family.

Functionally, binds to the 23S rRNA. This chain is Large ribosomal subunit protein bL9, found in Chromohalobacter salexigens (strain ATCC BAA-138 / DSM 3043 / CIP 106854 / NCIMB 13768 / 1H11).